The sequence spans 495 residues: N-succinylglutamate 5-semialdehyde dehydrogenase (495 aa).

Glycine 228–glycine 233 lines the NAD(+) pocket. Residues glutamate 251 and cysteine 285 contribute to the active site.

This sequence belongs to the aldehyde dehydrogenase family. AstD subfamily.

It carries out the reaction N-succinyl-L-glutamate 5-semialdehyde + NAD(+) + H2O = N-succinyl-L-glutamate + NADH + 2 H(+). It functions in the pathway amino-acid degradation; L-arginine degradation via AST pathway; L-glutamate and succinate from L-arginine: step 4/5. In terms of biological role, catalyzes the NAD-dependent reduction of succinylglutamate semialdehyde into succinylglutamate. The protein is N-succinylglutamate 5-semialdehyde dehydrogenase of Legionella pneumophila (strain Paris).